The sequence spans 300 residues: Estradiol 17-beta-dehydrogenase 11 (300 aa).

Residues 1–19 form the signal peptide; that stretch reads MKFLLDILLLLPLLIVCSL. Residue 40–64 participates in NADP(+) binding; sequence LITGAGHGIGRLTAYEFAKLKSKLV. S172 is a binding site for substrate. Catalysis depends on Y185, which acts as the Proton acceptor.

This sequence belongs to the short-chain dehydrogenases/reductases (SDR) family. 17-beta-HSD 3 subfamily. In terms of tissue distribution, present at high level in steroidogenic cells such as syncytiotrophoblasts, sebaceous gland, Leydig cells, and granulosa cells of the dominant follicle and corpus luteum. In lung, it is detected in the ciliated epithelium and in acini of adult trachea, in bronchioles, but not in alveoli. In the eye, it is detected in the nonpigmented epithelium of the ciliary body and, at lower level, in the inner nuclear layer of the retina (at protein level). Widely expressed. Highly expressed in retina, pancreas, kidney, liver, lung, adrenal, small intestine, ovary and heart.

The protein resides in the endoplasmic reticulum. The protein localises to the lipid droplet. The catalysed reaction is 17beta-estradiol + NAD(+) = estrone + NADH + H(+). It carries out the reaction 17beta-estradiol + NADP(+) = estrone + NADPH + H(+). Functionally, can convert androstan-3-alpha,17-beta-diol (3-alpha-diol) to androsterone in vitro, suggesting that it may participate in androgen metabolism during steroidogenesis. May act by metabolizing compounds that stimulate steroid synthesis and/or by generating metabolites that inhibit it. Has no activity toward DHEA (dehydroepiandrosterone), or A-dione (4-androste-3,17-dione), and only a slight activity toward testosterone to A-dione. Tumor-associated antigen in cutaneous T-cell lymphoma. This Homo sapiens (Human) protein is Estradiol 17-beta-dehydrogenase 11 (HSD17B11).